Reading from the N-terminus, the 263-residue chain is Interleukin-22 receptor subunit alpha-2 (263 aa).

An N-terminal signal peptide occupies residues 1–21; that stretch reads MMPKHCFLGFLISFFLTGVAG. 3 consecutive Fibronectin type-III domains span residues 26-68, 100-161, and 162-263; these read HESL…KIMF, GQRQ…TKID, and PPVM…VEIP. An N-linked (GlcNAc...) asparagine glycan is attached at asparagine 56. A disulfide bridge connects residues cysteine 110 and cysteine 118. N-linked (GlcNAc...) asparagine glycosylation is found at asparagine 166, asparagine 171, asparagine 192, and asparagine 209. An intrachain disulfide couples cysteine 238 to cysteine 259.

It belongs to the type II cytokine receptor family. In terms of tissue distribution, expressed in placenta, spleen, breast, skin and lung. Also detected in intestinal tract, testis, brain, heart and thymus. No expression found in prostate, bladder, kidney, ovary, muscle, bone marrow, liver and uterus. Isoform 1 is expressed only in placenta. Isoform 2 is expressed in placenta and breast and at lower level in spleen, skin, thymus and stomach.

The protein localises to the secreted. In terms of biological role, isoform 2 is a receptor for IL22. Binds to IL22, prevents interaction with the functional IL-22R complex and blocks the activity of IL22 (in vitro). May play an important role as an IL22 antagonist in the regulation of inflammatory responses. Its function is as follows. Isoform 1 may play a role in establishing and maintaining successful pregnancy. The chain is Interleukin-22 receptor subunit alpha-2 (IL22RA2) from Homo sapiens (Human).